Consider the following 186-residue polypeptide: Ribosome-recycling factor (186 aa).

It belongs to the RRF family.

The protein localises to the cytoplasm. Functionally, responsible for the release of ribosomes from messenger RNA at the termination of protein biosynthesis. May increase the efficiency of translation by recycling ribosomes from one round of translation to another. This chain is Ribosome-recycling factor, found in Azorhizobium caulinodans (strain ATCC 43989 / DSM 5975 / JCM 20966 / LMG 6465 / NBRC 14845 / NCIMB 13405 / ORS 571).